We begin with the raw amino-acid sequence, 406 residues long: Dihydroorotase, mitochondrial (406 aa).

Residues Met1–Lys41 constitute a mitochondrion transit peptide. His69, His71, Lys155, His193, His231, and Asp305 together coordinate Zn(2+). Lys155 carries the post-translational modification N6-carboxylysine.

This sequence belongs to the metallo-dependent hydrolases superfamily. DHOase family. Class II DHOase subfamily. The cofactor is Zn(2+).

It localises to the mitochondrion. The catalysed reaction is (S)-dihydroorotate + H2O = N-carbamoyl-L-aspartate + H(+). It participates in pyrimidine metabolism; UMP biosynthesis via de novo pathway; (S)-dihydroorotate from bicarbonate: step 3/3. This is Dihydroorotase, mitochondrial (PYRC) from Oryza sativa subsp. japonica (Rice).